A 76-amino-acid polypeptide reads, in one-letter code: Defensin-like protein 5 (76 aa).

The N-terminal stretch at 1-29 is a signal peptide; that stretch reads MKVSPRLNSALLLLFMILATVMGLVTVEA. Intrachain disulfides connect cysteine 32/cysteine 76, cysteine 43/cysteine 63, cysteine 49/cysteine 70, and cysteine 53/cysteine 72.

This sequence belongs to the DEFL family.

The protein resides in the secreted. Confers broad-spectrum resistance to pathogens. The chain is Defensin-like protein 5 (PDF2.4) from Arabidopsis thaliana (Mouse-ear cress).